Consider the following 535-residue polypeptide: MTDQTTRLPVRRALISVSDKTGVVDFARELAALGVEILSTGGTFKLLREHGVDAVEVADYTGFPEMMDGRVKTLHPKIHGGILGRRDLDAAVMAEHGIQPIDLVAVNLYPFAATVARPGCTLAEAIENIDIGGPTMVRSAAKNHKDVAIVVNAADYAGVLESLKNGGLTYAQRFDLALRAFEHTAAYDGMIANYLGTIDQGAETLTTEGRAAFPRTFNSQFVKAQDMRYGENPHQQAAFYVETSPAEASVATARQLQGKELSYNNVADTDAALECVKSFVKPACVIVKHANPCGVAVVPEDEGGIRKAYDLAYATDSESAFGGIIAFNRELDGATARAIVERQFVEVIIAPSVSAEAREAVAAKANVRLLECGQWPAERADGLDFKRVNGGLLVQSRDIGMIAEADLKVVTRRAPTEREIHDLIFAWKVAKFVKSNAIVYARNRQTIGVGAGQMSRVNSARIAAIKAEHAGLEVAGAVMASDAFFPFRDGIDNAAKAGITAVIQPGGSMRDNEVIAAADEAGMAMVFTGMRHFRH.

Positions threonine 6–valine 151 constitute an MGS-like domain.

It belongs to the PurH family.

The enzyme catalyses (6R)-10-formyltetrahydrofolate + 5-amino-1-(5-phospho-beta-D-ribosyl)imidazole-4-carboxamide = 5-formamido-1-(5-phospho-D-ribosyl)imidazole-4-carboxamide + (6S)-5,6,7,8-tetrahydrofolate. The catalysed reaction is IMP + H2O = 5-formamido-1-(5-phospho-D-ribosyl)imidazole-4-carboxamide. It participates in purine metabolism; IMP biosynthesis via de novo pathway; 5-formamido-1-(5-phospho-D-ribosyl)imidazole-4-carboxamide from 5-amino-1-(5-phospho-D-ribosyl)imidazole-4-carboxamide (10-formyl THF route): step 1/1. It functions in the pathway purine metabolism; IMP biosynthesis via de novo pathway; IMP from 5-formamido-1-(5-phospho-D-ribosyl)imidazole-4-carboxamide: step 1/1. In Azotobacter vinelandii (strain DJ / ATCC BAA-1303), this protein is Bifunctional purine biosynthesis protein PurH.